A 395-amino-acid polypeptide reads, in one-letter code: Yellow-related salivary protein M35 (395 aa).

Residues 1–18 (MKLILTVLAFLSLQVALS) form the signal peptide.

This sequence belongs to the major royal jelly protein family. As to expression, salivary gland (at protein level).

The protein localises to the secreted. Its function is as follows. Probably modulates blood feeding of sand flies on vertebrate species by binding and sequestering different mediators involved in the host response. Functions as a chemoattractant for host neutrophils; likely acts through a G-protein-coupled receptor and effect is dependent on calcium influx and phosphatidylinositol 3-kinases (PI3K) activity. Functionally, (Microbial infection) Probably enhances infection caused by Leishmania species in the host through augmentation of host neutrophil recruitment into the skin. The protein is Yellow-related salivary protein M35 of Phlebotomus duboscqi (Sandfly).